Reading from the N-terminus, the 335-residue chain is Biotin synthase (335 aa).

In terms of domain architecture, Radical SAM core spans 47-276; sequence FYGKKVKLNM…SKEIRISGGR (230 aa). [4Fe-4S] cluster is bound by residues Cys-65, Cys-69, and Cys-72. 4 residues coordinate [2Fe-2S] cluster: Cys-109, Cys-141, Cys-201, and Arg-271.

Belongs to the radical SAM superfamily. Biotin synthase family. In terms of assembly, homodimer. Requires [4Fe-4S] cluster as cofactor. The cofactor is [2Fe-2S] cluster.

It carries out the reaction (4R,5S)-dethiobiotin + (sulfur carrier)-SH + 2 reduced [2Fe-2S]-[ferredoxin] + 2 S-adenosyl-L-methionine = (sulfur carrier)-H + biotin + 2 5'-deoxyadenosine + 2 L-methionine + 2 oxidized [2Fe-2S]-[ferredoxin]. It participates in cofactor biosynthesis; biotin biosynthesis; biotin from 7,8-diaminononanoate: step 2/2. Functionally, catalyzes the conversion of dethiobiotin (DTB) to biotin by the insertion of a sulfur atom into dethiobiotin via a radical-based mechanism. This is Biotin synthase from Bacillus subtilis subsp. natto.